The sequence spans 380 residues: Elongation factor Ts, mitochondrial (380 aa).

The protein belongs to the EF-Ts family.

It localises to the mitochondrion. Associates with the EF-Tu.GDP complex and induces the exchange of GDP to GTP. It remains bound to the aminoacyl-tRNA.EF-Tu.GTP complex up to the GTP hydrolysis stage on the ribosome. This is Elongation factor Ts, mitochondrial from Plasmodium chabaudi chabaudi.